We begin with the raw amino-acid sequence, 171 residues long: uncharacterized protein (171 aa).

Disordered regions lie at residues M1–K41 and D114–R147. The span at A27–S38 shows a compositional bias: low complexity. Over residues L116–M125 the composition is skewed to polar residues.

This is an uncharacterized protein from Mus musculus (Mouse).